The primary structure comprises 328 residues: GTP 3',8-cyclase (328 aa).

Residues 1–229 (MNTVDYLRIS…ESFVPGNGPA (229 aa)) enclose the Radical SAM core domain. R8 serves as a coordination point for GTP. The [4Fe-4S] cluster site is built by C15 and C19. Y21 provides a ligand contact to S-adenosyl-L-methionine. C22 serves as a coordination point for [4Fe-4S] cluster. R60 provides a ligand contact to GTP. Residue G64 coordinates S-adenosyl-L-methionine. A GTP-binding site is contributed by T91. Residue S115 coordinates S-adenosyl-L-methionine. GTP is bound at residue K155. An S-adenosyl-L-methionine-binding site is contributed by M189. [4Fe-4S] cluster is bound by residues C252 and C255. 257–259 (RMR) provides a ligand contact to GTP. Residue C269 coordinates [4Fe-4S] cluster.

The protein belongs to the radical SAM superfamily. MoaA family. As to quaternary structure, monomer and homodimer. [4Fe-4S] cluster serves as cofactor.

It catalyses the reaction GTP + AH2 + S-adenosyl-L-methionine = (8S)-3',8-cyclo-7,8-dihydroguanosine 5'-triphosphate + 5'-deoxyadenosine + L-methionine + A + H(+). Its pathway is cofactor biosynthesis; molybdopterin biosynthesis. In terms of biological role, catalyzes the cyclization of GTP to (8S)-3',8-cyclo-7,8-dihydroguanosine 5'-triphosphate. The protein is GTP 3',8-cyclase of Trichodesmium erythraeum (strain IMS101).